A 163-amino-acid chain; its full sequence is Late embryogenesis abundant protein Dc3 (163 aa).

Disordered stretches follow at residues 1 to 117 (MASH…GGLM) and 139 to 163 (FGMAGADEEEKTTTTRVTRSSARTE). Composition is skewed to basic and acidic residues over residues 28-56 (TMKDKAQAAKDKASEMAGSARDRTVESKD), 67-84 (GAVKDKTCETAQAAKEKT), and 91-113 (TKEKASEMGESAKETAVAGKEKT). A run of 6 repeats spans residues 32-42 (KAQAAKDKASE), 43-53 (MAGSARDRTVE), 65-75 (KAGAVKDKTCE), 76-86 (TAQAAKEKTGG), 87-97 (AMQATKEKASE), and 103-115 (KETAVAGKEKTGG). The tract at residues 32–115 (KAQAAKDKAS…AVAGKEKTGG (84 aa)) is 6 X 11 AA approximate repeats. Over residues 152–163 (TTRVTRSSARTE) the composition is skewed to low complexity.

This sequence belongs to the LEA type 4 family.

This chain is Late embryogenesis abundant protein Dc3, found in Daucus carota (Wild carrot).